Here is a 108-residue protein sequence, read N- to C-terminus: MQALLCALAGLALLRAGTGEWGQGPRDTPGRRAAESPSSPGDLAGSPGCDRHAAVQRRLDIMEETVEKTVEHLEAEVTGLLGLLEELASNLPTGPFSPKPDLLGDDGF.

An N-terminal signal peptide occupies residues 1–19 (MQALLCALAGLALLRAGTG). Disordered regions lie at residues 18 to 49 (TGEW…SPGC) and 89 to 108 (SNLP…DDGF). Residues 54 to 91 (AVQRRLDIMEETVEKTVEHLEAEVTGLLGLLEELASNL) are a coiled coil.

It belongs to the PLAC9 family. In terms of tissue distribution, highly expressed in placenta, and weakly in ovary, testis, and lung.

The protein localises to the secreted. This chain is Placenta-specific protein 9 (Plac9), found in Mus musculus (Mouse).